Consider the following 194-residue polypeptide: Probable GTP-binding protein EngB (194 aa).

The 173-residue stretch at 22-194 (DLPEFALAGR…KFWDWIEDKM (173 aa)) folds into the EngB-type G domain. Residues 30–37 (GRSNVGKS), 57–61 (GKTQT), 75–78 (DVPG), 142–145 (TKMD), and 175–177 (FSS) each bind GTP. Mg(2+) contacts are provided by S37 and T59.

This sequence belongs to the TRAFAC class TrmE-Era-EngA-EngB-Septin-like GTPase superfamily. EngB GTPase family. Mg(2+) serves as cofactor.

Functionally, necessary for normal cell division and for the maintenance of normal septation. This chain is Probable GTP-binding protein EngB, found in Lactobacillus gasseri (strain ATCC 33323 / DSM 20243 / BCRC 14619 / CIP 102991 / JCM 1131 / KCTC 3163 / NCIMB 11718 / NCTC 13722 / AM63).